The following is a 111-amino-acid chain: MISTVSLFWALCVVCVINMARYYSSLRALLVVLRGCDPLLYQYVDGGGFFTSHGQPSKQVRLIGYIWAQRYLDHHDDEFIRRCQRVRGQFILTSALCGLVAIGLIGLAIWH.

2 helical membrane-spanning segments follow: residues 1–21 (MIST…NMAR) and 90–110 (FILT…LAIW).

This sequence belongs to the universal stress protein B family.

Its subcellular location is the cell inner membrane. This chain is Universal stress protein B, found in Erwinia tasmaniensis (strain DSM 17950 / CFBP 7177 / CIP 109463 / NCPPB 4357 / Et1/99).